A 906-amino-acid polypeptide reads, in one-letter code: Translation initiation factor IF-2 (906 aa).

Disordered stretches follow at residues 94–125, 165–232, and 270–321; these read APEK…PETA, ESEA…TGKK, and RQEQ…SSEV. Basic and acidic residues-rich tracts occupy residues 165 to 176, 222 to 232, and 270 to 284; these read ESEAEKGTEIEK, GPAEARETGKK, and RQEQ…KREA. Residues 299-313 show a composition bias toward basic residues; it reads QQRRSLKRGGKRKKY. In terms of domain architecture, tr-type G spans 405-574; it reads ERPPVITIMG…LLQAEMMELK (170 aa). The tract at residues 414 to 421 is G1; the sequence is GHVDHGKT. Position 414–421 (414–421) interacts with GTP; the sequence is GHVDHGKT. The segment at 439–443 is G2; it reads GITQH. The segment at 460 to 463 is G3; the sequence is DTPG. Residues 460–464 and 514–517 contribute to the GTP site; these read DTPGH and NKMD. The interval 514-517 is G4; it reads NKMD. A G5 region spans residues 550–552; it reads SAH.

This sequence belongs to the TRAFAC class translation factor GTPase superfamily. Classic translation factor GTPase family. IF-2 subfamily.

It localises to the cytoplasm. In terms of biological role, one of the essential components for the initiation of protein synthesis. Protects formylmethionyl-tRNA from spontaneous hydrolysis and promotes its binding to the 30S ribosomal subunits. Also involved in the hydrolysis of GTP during the formation of the 70S ribosomal complex. In Sulfurovum sp. (strain NBC37-1), this protein is Translation initiation factor IF-2.